The chain runs to 619 residues: Long-chain fatty acid transport protein 6 (619 aa).

The next 2 helical transmembrane spans lie at 22 to 42 (LLFP…RYGI) and 119 to 139 (VHVW…NSNL). Position 221 to 232 (221 to 232 (YIFTSGTTGLPK)) interacts with AMP.

It belongs to the ATP-dependent AMP-binding enzyme family.

Its subcellular location is the cell membrane. The protein resides in the sarcolemma. The enzyme catalyses a fatty acid(in) = a fatty acid(out). The catalysed reaction is hexadecanoate(out) = hexadecanoate(in). It catalyses the reaction (9Z,12Z)-octadecadienoate(out) = (9Z,12Z)-octadecadienoate(in). It carries out the reaction (9Z)-octadecenoate(out) = (9Z)-octadecenoate(in). The enzyme catalyses a very long-chain fatty acid + ATP + CoA = a very long-chain fatty acyl-CoA + AMP + diphosphate. The catalysed reaction is tetracosanoate + ATP + CoA = tetracosanoyl-CoA + AMP + diphosphate. It catalyses the reaction a long-chain fatty acid + ATP + CoA = a long-chain fatty acyl-CoA + AMP + diphosphate. It carries out the reaction (9Z)-octadecenoate + ATP + CoA = (9Z)-octadecenoyl-CoA + AMP + diphosphate. The enzyme catalyses (5Z,8Z,11Z,14Z)-eicosatetraenoate + ATP + CoA = (5Z,8Z,11Z,14Z)-eicosatetraenoyl-CoA + AMP + diphosphate. Its function is as follows. Mediates the import of long-chain fatty acids (LCFA) into the cell by facilitating their transport at the plasma membrane. Also functions as an acyl-CoA ligase catalyzing the ATP-dependent formation of fatty acyl-CoA using LCFA and very-long-chain fatty acids (VLCFA) as substrates. Plays a pivotal role in regulating available LCFA substrates from exogenous sources in tissues undergoing high levels of beta-oxidation such as the heart. The chain is Long-chain fatty acid transport protein 6 (Slc27a6) from Mus musculus (Mouse).